Here is a 202-residue protein sequence, read N- to C-terminus: Dephospho-CoA kinase (202 aa).

One can recognise a DPCK domain in the interval 3-202 (TIGITGGIGS…TKRPNPPDRL (200 aa)). Position 11–16 (11–16 (GSGKSV)) interacts with ATP. Residues 138–161 (RAMARDGSSAETMRQRMLSQEREQ) form a disordered region.

Belongs to the CoaE family.

The protein resides in the cytoplasm. It carries out the reaction 3'-dephospho-CoA + ATP = ADP + CoA + H(+). Its pathway is cofactor biosynthesis; coenzyme A biosynthesis; CoA from (R)-pantothenate: step 5/5. Functionally, catalyzes the phosphorylation of the 3'-hydroxyl group of dephosphocoenzyme A to form coenzyme A. The polypeptide is Dephospho-CoA kinase (Porphyromonas gingivalis (strain ATCC BAA-308 / W83)).